The chain runs to 607 residues: UPF0329 protein ECU06_1610 (607 aa).

Disordered stretches follow at residues 312–410 (VHEV…RSKG) and 531–570 (TSSE…PPGV). The segment covering 313–347 (HEVKERESEEKRREEESLRNAEELLRMEEREKGEG) has biased composition (basic and acidic residues). Basic residues predominate over residues 353-364 (KGKKKRGKKGAG). Over residues 365 to 374 (KAKEESKEED) the composition is skewed to basic and acidic residues. The segment covering 375–393 (RGEEEEESVEAEVPVEEMA) has biased composition (acidic residues). The segment covering 531-543 (TSSEKTGKGSSPS) has biased composition (polar residues). A compositionally biased stretch (acidic residues) spans 549–558 (DVDEIEEDGS).

It belongs to the UPF0329 family.

This Encephalitozoon cuniculi (strain GB-M1) (Microsporidian parasite) protein is UPF0329 protein ECU06_1610.